Consider the following 534-residue polypeptide: Protein BFR2 (534 aa).

A disordered region spans residues 27–148 (ENASLFQHNE…ETEEAQQKRH (122 aa)). Phosphoserine occurs at positions 41 and 44. Residues 52–77 (EETKKAHYLEVEKSKLRAEKGLELND) show a composition bias toward basic and acidic residues. The stretch at 86–161 (SRQALYEEVS…KLIQQETKQA (76 aa)) forms a coiled coil. Acidic residues-rich tracts occupy residues 93–114 (EVSENEDEEEEEEEEEEKEEDA) and 121–142 (SEDEEVEIDEEESDADGGETEE). Phosphoserine occurs at positions 366, 372, and 379.

The protein belongs to the AATF family.

Its subcellular location is the nucleus. The protein localises to the nucleolus. Involved in endoplasmic reticulum to Golgi transport. Involved in a protein-transport step blocked by brefeldin A, which disrupts the Golgi apparatus and its incoming protein flux. May also be involved for mass growth or cell proliferation. The sequence is that of Protein BFR2 (BFR2) from Saccharomyces cerevisiae (strain ATCC 204508 / S288c) (Baker's yeast).